The sequence spans 20 residues: Cytochrome P450 3A5 (20 aa).

Belongs to the cytochrome P450 family. Requires heme as cofactor.

It localises to the endoplasmic reticulum membrane. The protein localises to the microsome membrane. It carries out the reaction an organic molecule + reduced [NADPH--hemoprotein reductase] + O2 = an alcohol + oxidized [NADPH--hemoprotein reductase] + H2O + H(+). 6-beta-testosterone hydroxylase. The polypeptide is Cytochrome P450 3A5 (Papio sp. (Baboon)).